We begin with the raw amino-acid sequence, 1342 residues long: DNA-directed RNA polymerase subunit beta (1342 aa).

N6-acetyllysine occurs at positions 1022 and 1200.

It belongs to the RNA polymerase beta chain family. The RNAP catalytic core consists of 2 alpha, 1 beta, 1 beta' and 1 omega subunit. When a sigma factor is associated with the core the holoenzyme is formed, which can initiate transcription.

It catalyses the reaction RNA(n) + a ribonucleoside 5'-triphosphate = RNA(n+1) + diphosphate. Functionally, DNA-dependent RNA polymerase catalyzes the transcription of DNA into RNA using the four ribonucleoside triphosphates as substrates. This is DNA-directed RNA polymerase subunit beta from Escherichia fergusonii (strain ATCC 35469 / DSM 13698 / CCUG 18766 / IAM 14443 / JCM 21226 / LMG 7866 / NBRC 102419 / NCTC 12128 / CDC 0568-73).